We begin with the raw amino-acid sequence, 1801 residues long: Focadhesin (1801 aa).

Lys-819 is subject to N6-acetyllysine.

In terms of assembly, interacts with VCL. As to expression, ubiquitous. High expression in brain followed by testis, muscle, pancreas, heart, ovary, small intestine, placenta, prostate, thymus, kidney, colon, liver, lung, spleen and leukocytes. Expression is reduced in most glioblastomas and all glioblastoma cell lines.

The protein localises to the cell junction. Its subcellular location is the focal adhesion. The protein resides in the cytoplasm. It is found in the cytosol. Required for the maintenance of SKIC2 and SKIC3 proteostatic levels in the liver. May be involved in the regulation of RNA degradation by the exosome complex. Potential tumor suppressor in gliomas. The polypeptide is Focadhesin (Homo sapiens (Human)).